A 108-amino-acid polypeptide reads, in one-letter code: UPF0060 membrane protein Spro_2289 (108 aa).

The next 4 membrane-spanning stretches (helical) occupy residues 6–26, 31–51, 61–81, and 85–105; these read LLFF…YLWL, SAWL…LLTL, AAYG…VDGV, and ALDW…VSGW.

It belongs to the UPF0060 family.

It is found in the cell inner membrane. In Serratia proteamaculans (strain 568), this protein is UPF0060 membrane protein Spro_2289.